We begin with the raw amino-acid sequence, 846 residues long: Matrin-3 (846 aa).

Residue Ser2 is modified to N-acetylserine. At Lys3 the chain carries N6-acetyllysine; alternate. Lys3 is covalently cross-linked (Glycyl lysine isopeptide (Lys-Gly) (interchain with G-Cter in SUMO2); alternate). Ser4, Ser9, Ser14, Ser22, Ser41, Ser118, and Ser126 each carry phosphoserine. Residues Lys132 and Lys146 each participate in a glycyl lysine isopeptide (Lys-Gly) (interchain with G-Cter in SUMO2) cross-link. Disordered regions lie at residues 147 to 174 (RRRT…YRVP) and 187 to 213 (DSFD…ESGY). Thr150 bears the Phosphothreonine mark. The residue at position 157 (Ser157) is a Phosphoserine. Residue Tyr158 is modified to Phosphotyrosine. Over residues 160–174 (RDGRSATREPPYRVP) the composition is skewed to basic and acidic residues. 3 positions are modified to phosphoserine: Ser164, Ser188, and Ser195. A compositionally biased stretch (basic and acidic residues) spans 201 to 213 (DYDHGSRSQESGY). Tyr202 bears the Phosphotyrosine mark. A phosphoserine mark is found at Ser206, Ser208, and Ser211. Tyr219 carries the phosphotyrosine modification. Ser234 is subject to Phosphoserine. Lys245 participates in a covalent cross-link: Glycyl lysine isopeptide (Lys-Gly) (interchain with G-Cter in SUMO2). Ser264 carries the phosphoserine modification. Lys269 participates in a covalent cross-link: Glycyl lysine isopeptide (Lys-Gly) (interchain with G-Cter in SUMO2). A Phosphoserine modification is found at Ser275. The segment at 342–394 (PFMLQQSTNPAPGILGPPPPSFHLGGPAVGPRGNLGAGNGNLQGPRHMQKGRV) is disordered. Positions 398–473 (RVVHIMDFQR…KPVRVHLSQK (76 aa)) constitute an RRM 1 domain. Residues Lys478, Lys487, and Lys491 each participate in a glycyl lysine isopeptide (Lys-Gly) (interchain with G-Cter in SUMO2) cross-link. An RRM 2 domain is found at 496-571 (RVIHLSNLPH…RCVKVDLSEK (76 aa)). Ser509 and Ser511 each carry phosphoserine. A Glycyl lysine isopeptide (Lys-Gly) (interchain with G-Cter in SUMO2) cross-link involves residue Lys515. The residue at position 522 (Lys522) is an N6-acetyllysine; alternate. A Glycyl lysine isopeptide (Lys-Gly) (interchain with G-Cter in SUMO2); alternate cross-link involves residue Lys522. Ser533 carries the post-translational modification Phosphoserine. Glycyl lysine isopeptide (Lys-Gly) (interchain with G-Cter in SUMO2) cross-links involve residues Lys554 and Lys555. At Lys571 the chain carries N6-acetyllysine. Positions 588–779 (KKDKSRKRSY…EDYTIPDEYR (192 aa)) are disordered. Residues Ser596, Ser598, Ser604, and Ser606 each carry the phosphoserine modification. The segment covering 600-642 (DGKESPSDKKSKTDAQKTESPAEGKEQEEKSGEDGEKDTKDDQ) has biased composition (basic and acidic residues). Residues Lys616 and Lys629 each participate in a glycyl lysine isopeptide (Lys-Gly) (interchain with G-Cter in SUMO2) cross-link. Residues 652 to 664 (ESEDELLVDEEEA) are compositionally biased toward acidic residues. Phosphoserine occurs at positions 653, 670, 672, and 673. Residues 665–675 (AALLESGSSVG) are compositionally biased toward low complexity. The residue at position 678 (Thr678) is a Phosphothreonine. Ser688 is modified (phosphoserine). Residues 688–703 (SDGKKEPSDKAVKKDP) are compositionally biased toward basic and acidic residues. The Nuclear localization signal signature appears at 709–717 (SKKKLKKVD). Residues Lys718 and Lys735 each participate in a glycyl lysine isopeptide (Lys-Gly) (interchain with G-Cter in SUMO2) cross-link. Phosphothreonine is present on Thr740. 2 positions are modified to phosphoserine: Ser746 and Ser758. Over residues 766–779 (DENKEDYTIPDEYR) the composition is skewed to basic and acidic residues. A Glycyl lysine isopeptide (Lys-Gly) (interchain with G-Cter in SUMO2) cross-link involves residue Lys769. A Matrin-type zinc finger spans residues 800-831 (FYCKLCSLFYTNEEVAKNTHCSSLPHYQKLKK). Lys835 is modified (N6-acetyllysine; alternate). Residue Lys835 forms a Glycyl lysine isopeptide (Lys-Gly) (interchain with G-Cter in SUMO2); alternate linkage.

As to quaternary structure, part of a complex consisting of SFPQ, NONO and MATR3. Interacts with AGO1 and AGO2. Part of a complex composed at least of ASH2L, EMSY, HCFC1, HSPA8, CCAR2, MATR3, MKI67, RBBP5, TUBB2A, WDR5 and ZNF335; this complex may have a histone H3-specific methyltransferase activity. Interacts with TARDBP. Part of the HDP-RNP complex composed of at least HEXIM1, PRKDC, XRCC5, XRCC6, paraspeckle proteins (SFPQ, NONO, PSPC1, RBM14, and MATR3) and NEAT1 RNA. Interacts with FUS. Interacts with IGF2BP1. Interacts with IGF2BP2 and IGF2BP3. Interacts with RBPMS.

Its subcellular location is the nucleus matrix. In terms of biological role, may play a role in transcription or may interact with other nuclear matrix proteins to form the internal fibrogranular network. In association with the SFPQ-NONO heteromer may play a role in nuclear retention of defective RNAs. Plays a role in the regulation of DNA virus-mediated innate immune response by assembling into the HDP-RNP complex, a complex that serves as a platform for IRF3 phosphorylation and subsequent innate immune response activation through the cGAS-STING pathway. Binds to N6-methyladenosine (m6A)-containing mRNAs and contributes to MYC stability by binding to m6A-containing MYC mRNAs. May bind to specific miRNA hairpins. This chain is Matrin-3 (Matr3), found in Mus musculus (Mouse).